We begin with the raw amino-acid sequence, 222 residues long: Glutathione transferase GST 23 (222 aa).

The 80-residue stretch at 4–83 (KGVKVLGMWA…YIDEVWKGGY (80 aa)) folds into the GST N-terminal domain. Glutathione contacts are provided by residues serine 14, lysine 41, valine 55, and 67 to 68 (ES). A GST C-terminal domain is found at 89–220 (DPYERAQARF…ANKARREQLL (132 aa)).

It belongs to the GST superfamily.

It catalyses the reaction RX + glutathione = an S-substituted glutathione + a halide anion + H(+). Functionally, involved in multiple disease resistance (MDR). This Zea mays (Maize) protein is Glutathione transferase GST 23.